Reading from the N-terminus, the 157-residue chain is MHFLDESFWLAISFIIFVYLIYRPAKKAILKSLDMKVLEVQERVLKAEKLKDDAKLLFEQTEEQIKNLEALQLQMTKENNEITEKIVQEKTKEIEEFLEHKKVETIKLIESQKLLASKELQDEFSDEVVKLVSEYFHSTKNNNLSETDIAKNLMDKV.

Residues 1 to 21 (MHFLDESFWLAISFIIFVYLI) form a helical membrane-spanning segment.

It belongs to the ATPase B chain family. In terms of assembly, F-type ATPases have 2 components, F(1) - the catalytic core - and F(0) - the membrane proton channel. F(1) has five subunits: alpha(3), beta(3), gamma(1), delta(1), epsilon(1). F(0) has three main subunits: a(1), b(2) and c(10-14). The alpha and beta chains form an alternating ring which encloses part of the gamma chain. F(1) is attached to F(0) by a central stalk formed by the gamma and epsilon chains, while a peripheral stalk is formed by the delta and b chains.

It is found in the cell inner membrane. Its function is as follows. F(1)F(0) ATP synthase produces ATP from ADP in the presence of a proton or sodium gradient. F-type ATPases consist of two structural domains, F(1) containing the extramembraneous catalytic core and F(0) containing the membrane proton channel, linked together by a central stalk and a peripheral stalk. During catalysis, ATP synthesis in the catalytic domain of F(1) is coupled via a rotary mechanism of the central stalk subunits to proton translocation. In terms of biological role, component of the F(0) channel, it forms part of the peripheral stalk, linking F(1) to F(0). In Rickettsia bellii (strain RML369-C), this protein is ATP synthase subunit b.